Consider the following 243-residue polypeptide: Ubiquinone/menaquinone biosynthesis C-methyltransferase UbiE (243 aa).

Residues threonine 69, aspartate 90, and 116–117 (DA) contribute to the S-adenosyl-L-methionine site.

This sequence belongs to the class I-like SAM-binding methyltransferase superfamily. MenG/UbiE family.

The catalysed reaction is a 2-demethylmenaquinol + S-adenosyl-L-methionine = a menaquinol + S-adenosyl-L-homocysteine + H(+). It carries out the reaction a 2-methoxy-6-(all-trans-polyprenyl)benzene-1,4-diol + S-adenosyl-L-methionine = a 5-methoxy-2-methyl-3-(all-trans-polyprenyl)benzene-1,4-diol + S-adenosyl-L-homocysteine + H(+). It functions in the pathway quinol/quinone metabolism; menaquinone biosynthesis; menaquinol from 1,4-dihydroxy-2-naphthoate: step 2/2. Its pathway is cofactor biosynthesis; ubiquinone biosynthesis. In terms of biological role, methyltransferase required for the conversion of demethylmenaquinol (DMKH2) to menaquinol (MKH2) and the conversion of 2-polyprenyl-6-methoxy-1,4-benzoquinol (DDMQH2) to 2-polyprenyl-3-methyl-6-methoxy-1,4-benzoquinol (DMQH2). The protein is Ubiquinone/menaquinone biosynthesis C-methyltransferase UbiE of Paraburkholderia xenovorans (strain LB400).